Reading from the N-terminus, the 562-residue chain is Arf-GAP domain and FG repeat-containing protein 1 (562 aa).

The Arf-GAP domain maps to 11–135 (EKHLKMLRDM…WYVPPEQAKV (125 aa)). A C4-type zinc finger spans residues 29 to 52 (CFDCDQRGPTYVNMTVGSFVCTSC). S167 is subject to Phosphoserine. Residues 168 to 194 (APALHLNKGTPSQSPVVGRSQAQQQEK) are disordered. Residues 176 to 191 (GTPSQSPVVGRSQAQQ) show a composition bias toward polar residues. T177 is modified (phosphothreonine). A phosphoserine mark is found at S181 and S362. S367 carries an O-linked (GlcNAc) serine glycan.

In terms of assembly, interacts with EPS15R and EPS15. Interacts with FCHO1. Post-translationally, O-glycosylated.

The protein localises to the nucleus. It is found in the cytoplasmic vesicle. Its function is as follows. Required for vesicle docking or fusion during acrosome biogenesis. May play a role in RNA trafficking or localization. In Bos taurus (Bovine), this protein is Arf-GAP domain and FG repeat-containing protein 1 (AGFG1).